The sequence spans 226 residues: UPF0502 protein Daci_5373 (226 aa).

It belongs to the UPF0502 family.

The polypeptide is UPF0502 protein Daci_5373 (Delftia acidovorans (strain DSM 14801 / SPH-1)).